We begin with the raw amino-acid sequence, 505 residues long: Trans-cinnamate 4-monooxygenase (505 aa).

A helical membrane pass occupies residues 3–23; that stretch reads LLLLEKTLLGSFVAILVAILV. Residues 213–218 and A306 contribute to the (E)-cinnamate site; that span reads RSRLAQ. C447 lines the heme pocket.

Belongs to the cytochrome P450 family. Heme is required as a cofactor.

It localises to the membrane. It catalyses the reaction (E)-cinnamate + reduced [NADPH--hemoprotein reductase] + O2 = (E)-4-coumarate + oxidized [NADPH--hemoprotein reductase] + H2O + H(+). It functions in the pathway phenylpropanoid metabolism; trans-4-coumarate biosynthesis; trans-4-coumarate from trans-cinnamate: step 1/1. Catalyzes the first oxidative step of the phenylpropanoid pathway in higher plants by transforming trans-cinnamate into p-coumarate. The compounds formed by this pathway are essential components for lignification, pollination, and defense against ultraviolet light, predators and pathogens. The polypeptide is Trans-cinnamate 4-monooxygenase (CYP73A13) (Populus tremuloides (Quaking aspen)).